Consider the following 89-residue polypeptide: Small ribosomal subunit protein uS15 (89 aa).

The protein belongs to the universal ribosomal protein uS15 family. Part of the 30S ribosomal subunit. Forms a bridge to the 50S subunit in the 70S ribosome, contacting the 23S rRNA.

Functionally, one of the primary rRNA binding proteins, it binds directly to 16S rRNA where it helps nucleate assembly of the platform of the 30S subunit by binding and bridging several RNA helices of the 16S rRNA. Forms an intersubunit bridge (bridge B4) with the 23S rRNA of the 50S subunit in the ribosome. In Frankia casuarinae (strain DSM 45818 / CECT 9043 / HFP020203 / CcI3), this protein is Small ribosomal subunit protein uS15.